The sequence spans 538 residues: Probable bifunctional riboflavin biosynthesis protein RIBA 1, chloroplastic (538 aa).

Residues Met1–Leu16 are compositionally biased toward polar residues. The segment at Met1 to Asn29 is disordered. A chloroplast-targeting transit peptide spans Met1 to Val73. The interval Arg46–Lys311 is DHBP synthase. D-ribulose 5-phosphate contacts are provided by residues Arg134–Glu135, Asp139, Arg249–Thr253, and Glu273. A Mg(2+)-binding site is contributed by Glu135. Residue His252 coordinates Mg(2+). The GTP cyclohydrolase II stretch occupies residues Arg312–Gln530. Arg362–Glu366 contributes to the GTP binding site. Cys367, Cys378, and Cys380 together coordinate Zn(2+). GTP is bound by residues Gln383, Glu406–Arg408, and Thr428. The active-site Proton acceptor; for GTP cyclohydrolase activity is the Asp440. Arg442 (nucleophile; for GTP cyclohydrolase activity) is an active-site residue. Thr463 and Lys468 together coordinate GTP. The disordered stretch occupies residues His506–Glu538.

It in the N-terminal section; belongs to the DHBP synthase family. The protein in the C-terminal section; belongs to the GTP cyclohydrolase II family. Requires Mg(2+) as cofactor. The cofactor is Mn(2+). Zn(2+) is required as a cofactor.

Its subcellular location is the plastid. It is found in the chloroplast. It carries out the reaction D-ribulose 5-phosphate = (2S)-2-hydroxy-3-oxobutyl phosphate + formate + H(+). The enzyme catalyses GTP + 4 H2O = 2,5-diamino-6-hydroxy-4-(5-phosphoribosylamino)-pyrimidine + formate + 2 phosphate + 3 H(+). The protein operates within cofactor biosynthesis; riboflavin biosynthesis; 2-hydroxy-3-oxobutyl phosphate from D-ribulose 5-phosphate: step 1/1. It functions in the pathway cofactor biosynthesis; riboflavin biosynthesis; 5-amino-6-(D-ribitylamino)uracil from GTP: step 1/4. Functionally, involved in riboflavin biosynthesis. Catalyzes both the conversion of D-ribulose 5-phosphate to formate and 3,4-dihydroxy-2-butanone 4-phosphate and the conversion of GTP to 2,5-diamino-6-ribosylamino-4(3H)-pyrimidinone 5'-phosphate (DARP), formate and pyrophosphate. The polypeptide is Probable bifunctional riboflavin biosynthesis protein RIBA 1, chloroplastic (RIBA1) (Oryza sativa subsp. japonica (Rice)).